The following is a 379-amino-acid chain: UDP-N-acetylglucosamine--N-acetylmuramyl-(pentapeptide) pyrophosphoryl-undecaprenol N-acetylglucosamine transferase (379 aa).

UDP-N-acetyl-alpha-D-glucosamine is bound by residues 19-21 (TGG), Asn133, Arg174, Ser207, Ile261, and Gln306.

This sequence belongs to the glycosyltransferase 28 family. MurG subfamily.

It is found in the cell inner membrane. It carries out the reaction di-trans,octa-cis-undecaprenyl diphospho-N-acetyl-alpha-D-muramoyl-L-alanyl-D-glutamyl-meso-2,6-diaminopimeloyl-D-alanyl-D-alanine + UDP-N-acetyl-alpha-D-glucosamine = di-trans,octa-cis-undecaprenyl diphospho-[N-acetyl-alpha-D-glucosaminyl-(1-&gt;4)]-N-acetyl-alpha-D-muramoyl-L-alanyl-D-glutamyl-meso-2,6-diaminopimeloyl-D-alanyl-D-alanine + UDP + H(+). Its pathway is cell wall biogenesis; peptidoglycan biosynthesis. Functionally, cell wall formation. Catalyzes the transfer of a GlcNAc subunit on undecaprenyl-pyrophosphoryl-MurNAc-pentapeptide (lipid intermediate I) to form undecaprenyl-pyrophosphoryl-MurNAc-(pentapeptide)GlcNAc (lipid intermediate II). In Porphyromonas gingivalis (strain ATCC 33277 / DSM 20709 / CIP 103683 / JCM 12257 / NCTC 11834 / 2561), this protein is UDP-N-acetylglucosamine--N-acetylmuramyl-(pentapeptide) pyrophosphoryl-undecaprenol N-acetylglucosamine transferase.